We begin with the raw amino-acid sequence, 194 residues long: Imidazoleglycerol-phosphate dehydratase (194 aa).

This sequence belongs to the imidazoleglycerol-phosphate dehydratase family.

Its subcellular location is the cytoplasm. The catalysed reaction is D-erythro-1-(imidazol-4-yl)glycerol 3-phosphate = 3-(imidazol-4-yl)-2-oxopropyl phosphate + H2O. It functions in the pathway amino-acid biosynthesis; L-histidine biosynthesis; L-histidine from 5-phospho-alpha-D-ribose 1-diphosphate: step 6/9. This Bacillus cereus (strain ATCC 14579 / DSM 31 / CCUG 7414 / JCM 2152 / NBRC 15305 / NCIMB 9373 / NCTC 2599 / NRRL B-3711) protein is Imidazoleglycerol-phosphate dehydratase.